A 321-amino-acid polypeptide reads, in one-letter code: Zinc finger protein 524 (321 aa).

2 stretches are compositionally biased toward polar residues: residues Met1 to Ser14 and Ala39 to Ser48. Disordered regions lie at residues Met1–Leu80 and Val86–Lys105. Residues Ser49–Arg59 constitute a DNA-binding region (a.T hook). 4 consecutive C2H2-type zinc fingers follow at residues His109–His131, His137–His159, Phe165–His187, and Tyr193–His216. Positions Gly248 to Asp321 are disordered. Positions Pro262–Ser271 are enriched in polar residues. Residues Thr274–Gln285 are compositionally biased toward gly residues.

The protein belongs to the krueppel C2H2-type zinc-finger protein family.

The protein resides in the nucleus. Functionally, may be involved in transcriptional regulation. The sequence is that of Zinc finger protein 524 (Znf524) from Mus musculus (Mouse).